The following is a 120-amino-acid chain: Aspartate 1-decarboxylase (120 aa).

Ser25 serves as the catalytic Schiff-base intermediate with substrate; via pyruvic acid. A Pyruvic acid (Ser) modification is found at Ser25. Thr57 is a substrate binding site. The active-site Proton donor is the Tyr58. 72–74 provides a ligand contact to substrate; that stretch reads GAA.

This sequence belongs to the PanD family. Heterooctamer of four alpha and four beta subunits. Pyruvate serves as cofactor. Post-translationally, is synthesized initially as an inactive proenzyme, which is activated by self-cleavage at a specific serine bond to produce a beta-subunit with a hydroxyl group at its C-terminus and an alpha-subunit with a pyruvoyl group at its N-terminus.

It localises to the cytoplasm. It catalyses the reaction L-aspartate + H(+) = beta-alanine + CO2. It functions in the pathway cofactor biosynthesis; (R)-pantothenate biosynthesis; beta-alanine from L-aspartate: step 1/1. Its function is as follows. Catalyzes the pyruvoyl-dependent decarboxylation of aspartate to produce beta-alanine. The sequence is that of Aspartate 1-decarboxylase from Helicobacter hepaticus (strain ATCC 51449 / 3B1).